The following is a 211-amino-acid chain: Probable oligoribonuclease (211 aa).

The region spanning 38-202 is the Exonuclease domain; that stretch reads IVWMDLEMTG…DDIRESIKEL (165 aa). The active site involves Tyr-159.

Belongs to the oligoribonuclease family.

Its function is as follows. 3'-to-5' exoribonuclease specific for small oligoribonucleotides. This chain is Probable oligoribonuclease, found in Drosophila melanogaster (Fruit fly).